The sequence spans 158 residues: NAD(P)H-quinone oxidoreductase subunit J, chloroplastic (158 aa).

This sequence belongs to the complex I 30 kDa subunit family. NDH is composed of at least 16 different subunits, 5 of which are encoded in the nucleus.

It is found in the plastid. It localises to the chloroplast thylakoid membrane. The enzyme catalyses a plastoquinone + NADH + (n+1) H(+)(in) = a plastoquinol + NAD(+) + n H(+)(out). The catalysed reaction is a plastoquinone + NADPH + (n+1) H(+)(in) = a plastoquinol + NADP(+) + n H(+)(out). Functionally, NDH shuttles electrons from NAD(P)H:plastoquinone, via FMN and iron-sulfur (Fe-S) centers, to quinones in the photosynthetic chain and possibly in a chloroplast respiratory chain. The immediate electron acceptor for the enzyme in this species is believed to be plastoquinone. Couples the redox reaction to proton translocation, and thus conserves the redox energy in a proton gradient. This chain is NAD(P)H-quinone oxidoreductase subunit J, chloroplastic, found in Lactuca sativa (Garden lettuce).